The sequence spans 451 residues: Bifunctional protein GlmU (451 aa).

A pyrophosphorylase region spans residues 1-229; sequence MQRHAIILAA…FDEIIGVNDR (229 aa). Residues 8–11, K22, Q72, and 77–78 contribute to the UDP-N-acetyl-alpha-D-glucosamine site; these read LAAG and GT. D102 is a Mg(2+) binding site. UDP-N-acetyl-alpha-D-glucosamine-binding residues include G139, E154, and N227. N227 lines the Mg(2+) pocket. The interval 230-250 is linker; it reads LMLSEAEKALQQRINRYHMEN. The N-acetyltransferase stretch occupies residues 251–451; the sequence is GVTIIDPSST…QVNKEGYLKK (201 aa). Positions 332 and 350 each coordinate UDP-N-acetyl-alpha-D-glucosamine. Catalysis depends on H362, which acts as the Proton acceptor. Residues Y365 and N376 each coordinate UDP-N-acetyl-alpha-D-glucosamine. Acetyl-CoA contacts are provided by residues 385–386, A422, and R439; that span reads NY.

The protein in the N-terminal section; belongs to the N-acetylglucosamine-1-phosphate uridyltransferase family. In the C-terminal section; belongs to the transferase hexapeptide repeat family. As to quaternary structure, homotrimer. It depends on Mg(2+) as a cofactor.

The protein resides in the cytoplasm. It catalyses the reaction alpha-D-glucosamine 1-phosphate + acetyl-CoA = N-acetyl-alpha-D-glucosamine 1-phosphate + CoA + H(+). The enzyme catalyses N-acetyl-alpha-D-glucosamine 1-phosphate + UTP + H(+) = UDP-N-acetyl-alpha-D-glucosamine + diphosphate. The protein operates within nucleotide-sugar biosynthesis; UDP-N-acetyl-alpha-D-glucosamine biosynthesis; N-acetyl-alpha-D-glucosamine 1-phosphate from alpha-D-glucosamine 6-phosphate (route II): step 2/2. It participates in nucleotide-sugar biosynthesis; UDP-N-acetyl-alpha-D-glucosamine biosynthesis; UDP-N-acetyl-alpha-D-glucosamine from N-acetyl-alpha-D-glucosamine 1-phosphate: step 1/1. It functions in the pathway bacterial outer membrane biogenesis; LPS lipid A biosynthesis. Functionally, catalyzes the last two sequential reactions in the de novo biosynthetic pathway for UDP-N-acetylglucosamine (UDP-GlcNAc). The C-terminal domain catalyzes the transfer of acetyl group from acetyl coenzyme A to glucosamine-1-phosphate (GlcN-1-P) to produce N-acetylglucosamine-1-phosphate (GlcNAc-1-P), which is converted into UDP-GlcNAc by the transfer of uridine 5-monophosphate (from uridine 5-triphosphate), a reaction catalyzed by the N-terminal domain. The chain is Bifunctional protein GlmU from Staphylococcus epidermidis.